The chain runs to 1491 residues: Chromosome partition protein MukB (1491 aa).

ATP is bound at residue 34–41; it reads GGNGAGKS. Coiled coils occupy residues 302 to 450, 490 to 600, 781 to 806, 836 to 1109, and 1210 to 1239; these read LIEQ…LKAE, ARSE…RFES, RAAR…AKAS, EQAL…DLRT, and VEAI…ISSD. Residues 667-784 form a flexible hinge region; it reads PGGSNDPRLK…AIPLFGRAAR (118 aa). The tract at residues 1059–1080 is disordered; that stretch reads QRRRDELQERLHTSRSRKSEYE.

Belongs to the SMC family. MukB subfamily. Homodimerization via its hinge domain. Binds to DNA via its C-terminal region. Interacts, and probably forms a ternary complex, with MukE and MukF via its C-terminal region. The complex formation is stimulated by calcium or magnesium. Interacts with tubulin-related protein FtsZ.

It localises to the cytoplasm. Its subcellular location is the nucleoid. Its function is as follows. Plays a central role in chromosome condensation, segregation and cell cycle progression. Functions as a homodimer, which is essential for chromosome partition. Involved in negative DNA supercoiling in vivo, and by this means organize and compact chromosomes. May achieve or facilitate chromosome segregation by condensation DNA from both sides of a centrally located replisome during cell division. The protein is Chromosome partition protein MukB of Vibrio cholerae serotype O1 (strain ATCC 39315 / El Tor Inaba N16961).